The chain runs to 124 residues: Competence protein ComGG (124 aa).

Residues methionine 1–alanine 28 form the signal peptide.

As to quaternary structure, the transformation pili are flexible filaments, consisting mainly of the major pilin ComGC and smaller amounts of the minor pilins, including at least ComGD, ComGF and ComGG. Interacts with ComGC; the interaction is probably direct. Interacts with ComGD. Interacts with ComGF. May act as a link between ComGC, ComGD and ComGF. Homodimer; disulfide-linked. A minor fraction of ComGG is found as a disulfide-bonded homodimer. Post-translationally, partial processing of ComGG in competent cells requires ComC.

The protein resides in the cell membrane. The protein localises to the secreted. Required for formation of the type IV-like pilus (T4P) that plays a role in transformation. Transformation pili are dynamically extended and retracted, perhaps thereby promoting DNA uptake and transformation. Required for transformation and DNA binding. In Bacillus subtilis (strain 168), this protein is Competence protein ComGG (comGG).